The following is a 494-amino-acid chain: Putative NAD kinase 3 (494 aa).

This sequence belongs to the NAD kinase family.

The enzyme catalyses NAD(+) + ATP = ADP + NADP(+) + H(+). In Oryza sativa subsp. japonica (Rice), this protein is Putative NAD kinase 3.